Here is a 504-residue protein sequence, read N- to C-terminus: Anaerobic nitric oxide reductase transcription regulator NorR (504 aa).

D57 bears the 4-aspartylphosphate mark. The region spanning 187–416 (MIGLSPGMTQ…LEHAIHRAVV (230 aa)) is the Sigma-54 factor interaction domain. ATP is bound by residues 215-222 (GETGTGKE) and 278-287 (ADNGTLFLDE). Positions 479 to 498 (WAACARMLETDVANLHRLAK) form a DNA-binding region, H-T-H motif.

Its pathway is nitrogen metabolism; nitric oxide reduction. Required for the expression of anaerobic nitric oxide (NO) reductase, acts as a transcriptional activator for at least the norVW operon. Activation also requires sigma-54. This is Anaerobic nitric oxide reductase transcription regulator NorR from Escherichia coli (strain 55989 / EAEC).